A 304-amino-acid polypeptide reads, in one-letter code: Tritrans,polycis-undecaprenyl-diphosphate synthase (geranylgeranyl-diphosphate specific) (304 aa).

Residue Asp-33 is part of the active site. Mg(2+) is bound at residue Asp-33. Substrate contacts are provided by residues 34 to 37 (GNRR), Lys-46, His-50, and 78 to 80 (STE). Asn-81 acts as the Proton acceptor in catalysis. Residues Phe-82, Arg-84, Arg-203, and 209–211 (RTS) contribute to the substrate site.

It belongs to the UPP synthase family. In terms of assembly, homodimer. The cofactor is Mg(2+).

It carries out the reaction geranylgeranyl diphosphate + 7 isopentenyl diphosphate = tri-trans,hepta-cis-undecaprenyl diphosphate + 7 diphosphate. In terms of biological role, catalyzes the sequential condensation of isopentenyl diphosphate (IPP) with geranylgeranyl diphosphate (GGPP) to yield (2Z,6Z,10Z,14Z,18Z,22Z,26Z,30E,34E,38E)-undecaprenyl diphosphate (tritrans,heptacis-UPP). It is probably the precursor of glycosyl carrier lipids. The protein is Tritrans,polycis-undecaprenyl-diphosphate synthase (geranylgeranyl-diphosphate specific) of Haloarcula marismortui (strain ATCC 43049 / DSM 3752 / JCM 8966 / VKM B-1809) (Halobacterium marismortui).